Reading from the N-terminus, the 265-residue chain is Probable cyclic nucleotide phosphodiesterase SynWH7803_1390 (265 aa).

Asp9, His11, Asp49, Asn86, His157, His196, and His198 together coordinate Fe cation. Residues His11, Asp49, and 86 to 87 (NH) contribute to the AMP site. Position 198 (His198) interacts with AMP.

Belongs to the cyclic nucleotide phosphodiesterase class-III family. Fe(2+) is required as a cofactor.

The polypeptide is Probable cyclic nucleotide phosphodiesterase SynWH7803_1390 (Synechococcus sp. (strain WH7803)).